We begin with the raw amino-acid sequence, 197 residues long: MIASDGLGIAGVDEVGRGCLFGPVFAAAVVLSDHAAEHLQAAGLTDSKALTPSRRAALVPLIEAHAHAWGLGQSSARAVDRDGIRSATEQAMLCALQRLPCRPQLVLVDGVLPLRLWEGSQRTIVRGDSSHAAIAAASVLAKEARDALIRRLSNRFPGYGLERHAGYGTAQHRAALLACGPTPLHRHSFLRKLFATV.

In terms of domain architecture, RNase H type-2 spans 7–197; sequence LGIAGVDEVG…SFLRKLFATV (191 aa). 3 residues coordinate a divalent metal cation: Asp-13, Glu-14, and Asp-109.

This sequence belongs to the RNase HII family. Requires Mn(2+) as cofactor. The cofactor is Mg(2+).

It is found in the cytoplasm. The catalysed reaction is Endonucleolytic cleavage to 5'-phosphomonoester.. Endonuclease that specifically degrades the RNA of RNA-DNA hybrids. This is Ribonuclease HII from Synechococcus sp. (strain CC9311).